An 847-amino-acid polypeptide reads, in one-letter code: B-cell receptor CD22 (847 aa).

An N-terminal signal peptide occupies residues 1–19 (MHLLGPWLLLLVLEYLAFC). An Ig-like V-type domain is found at 20-138 (DSSKWAFEHP…MERIHLNVSE (119 aa)). Residues 20–687 (DSSKWAFEHP…YYSPETIGRR (668 aa)) are Extracellular-facing. N-linked (GlcNAc...) asparagine glycosylation is found at Asn67, Asn101, and Asn112. Residue Arg120 coordinates N-acetylneuraminate. 9 N-linked (GlcNAc...) asparagine glycosylation sites follow: Asn135, Asn164, Asn231, Asn295, Asn363, Asn428, Asn445, Asn448, and Asn479. 6 Ig-like C2-type domains span residues 143-235 (PHIQ…DTVQ), 242-324 (PKLE…AEVF), 331-416 (PEPS…LDVQ), 419-500 (PKKV…VALN), 505-582 (PRDV…QTAS), and 593-676 (PRRL…STLN). A disulfide bond links Cys161 and Cys219. 2 disulfide bridges follow: Cys265/Cys309 and Cys353/Cys396. Intrachain disulfides connect Cys442–Cys484 and Cys529–Cys571. N-linked (GlcNAc...) asparagine glycosylation is found at Asn574 and Asn634. The cysteines at positions 616 and 659 are disulfide-linked. The chain crosses the membrane as a helical span at residues 688-708 (VAVGLGSCLAILILAICGLKL). The Cytoplasmic portion of the chain corresponds to 709–847 (QRRWKRTQSQ…ENVDYVILKH (139 aa)). 3 positions are modified to phosphoserine: Ser725, Ser726, and Ser729. 2 short sequence motifs (ITIM motif) span residues 760–765 (ISYTTL) and 794–799 (VTYSVL). Tyr762 carries the post-translational modification Phosphotyrosine. Residues Tyr807, Tyr822, and Tyr842 each carry the phosphotyrosine modification. 2 short sequence motifs (ITIM motif) span residues 820–825 (IHYSEL) and 840–845 (VDYVIL).

It belongs to the immunoglobulin superfamily. SIGLEC (sialic acid binding Ig-like lectin) family. Predominantly monomer of isoform CD22-beta. Also found as heterodimer of isoform CD22-beta and a shorter isoform. Interacts with PTPN6/SHP-1, LYN, SYK, PIK3R1/PIK3R2 and PLCG1 upon phosphorylation. Interacts with GRB2, INPP5D and SHC1 upon phosphorylation. May form a complex with INPP5D/SHIP, GRB2 and SHC1. Post-translationally, phosphorylation of Tyr-762, Tyr-807 and Tyr-822 are involved in binding to SYK, GRB2 and SYK, respectively. Phosphorylation of Tyr-842 is involved in binding to SYK, PLCG2 and PIK3R1/PIK3R2. In terms of processing, phosphorylated on tyrosine residues by LYN.

It is found in the cell membrane. Its function is as follows. Most highly expressed siglec (sialic acid-binding immunoglobulin-like lectin) on B-cells that plays a role in various aspects of B-cell biology including differentiation, antigen presentation, and trafficking to bone marrow. Binds to alpha 2,6-linked sialic acid residues of surface molecules such as CD22 itself, CD45 and IgM in a cis configuration. Can also bind to ligands on other cells as an adhesion molecule in a trans configuration. Acts as an inhibitory coreceptor on the surface of B-cells and inhibits B-cell receptor induced signaling, characterized by inhibition of the calcium mobilization and cellular activation. Mechanistically, the immunoreceptor tyrosine-based inhibitory motif domain is phosphorylated by the Src kinase LYN, which in turn leads to the recruitment of the protein tyrosine phosphatase 1/PTPN6, leading to the negative regulation of BCR signaling. If this negative signaling from is of sufficient strength, apoptosis of the B-cell can be induced. The protein is B-cell receptor CD22 of Gorilla gorilla gorilla (Western lowland gorilla).